Here is an 87-residue protein sequence, read N- to C-terminus: MEERRKEKGKEGRRGKATGHSVDKFSRSNLPEMEKRKLHLPPGTALFVFVNNTLPQTAQLMGSVYESYKDEGDGFLYLCYSSEKTFG.

The span at 1 to 14 (MEERRKEKGKEGRR) shows a compositional bias: basic and acidic residues. Residues 1-30 (MEERRKEKGKEGRRGKATGHSVDKFSRSNL) form a disordered region. Glycine 87 is lipidated: Phosphatidylethanolamine amidated glycine.

The protein belongs to the ATG8 family. In terms of assembly, interacts with ATG4. Post-translationally, the C-terminal Gly is amidated with phosphatidylethanolamine by an activating system similar to that for ubiquitin.

Its subcellular location is the cytoplasmic vesicle. The protein localises to the autophagosome membrane. It localises to the vacuole membrane. It is found in the cytoplasm. The protein resides in the cytoskeleton. Functionally, ubiquitin-like modifier involved in autophagosomes formation. May mediate the delivery of the autophagosomes to the vacuole via the microtubule cytoskeleton. This chain is Putative autophagy-related protein 8E (ATG8E), found in Oryza sativa subsp. japonica (Rice).